We begin with the raw amino-acid sequence, 274 residues long: Undecaprenyl-diphosphatase (274 aa).

The next 8 helical transmembrane spans lie at 4–24 (LLVI…LLPI), 46–66 (VVFE…EYRV), 86–106 (INVA…SDFI), 109–129 (VLFS…IIMW), 145–165 (ISYA…IPGT), 188–208 (FSFF…LWEA), 214–234 (IEDM…TFAV), and 250–270 (FAWY…TGVI).

This sequence belongs to the UppP family.

It is found in the cell inner membrane. The catalysed reaction is di-trans,octa-cis-undecaprenyl diphosphate + H2O = di-trans,octa-cis-undecaprenyl phosphate + phosphate + H(+). Catalyzes the dephosphorylation of undecaprenyl diphosphate (UPP). Confers resistance to bacitracin. This Cellvibrio japonicus (strain Ueda107) (Pseudomonas fluorescens subsp. cellulosa) protein is Undecaprenyl-diphosphatase.